The sequence spans 881 residues: Valine--tRNA ligase (881 aa).

Residues 48-58 carry the 'HIGH' region motif; the sequence is PNITGKLHLGH. Positions 527–531 match the 'KMSKS' region motif; the sequence is KMSKS. K530 contributes to the ATP binding site. 2 coiled-coil regions span residues 721-747 and 811-881; these read KNET…AEMN and LLDL…AALK.

It belongs to the class-I aminoacyl-tRNA synthetase family. ValS type 1 subfamily. In terms of assembly, monomer.

The protein resides in the cytoplasm. It catalyses the reaction tRNA(Val) + L-valine + ATP = L-valyl-tRNA(Val) + AMP + diphosphate. Its function is as follows. Catalyzes the attachment of valine to tRNA(Val). As ValRS can inadvertently accommodate and process structurally similar amino acids such as threonine, to avoid such errors, it has a 'posttransfer' editing activity that hydrolyzes mischarged Thr-tRNA(Val) in a tRNA-dependent manner. The polypeptide is Valine--tRNA ligase (Clostridium acetobutylicum (strain ATCC 824 / DSM 792 / JCM 1419 / IAM 19013 / LMG 5710 / NBRC 13948 / NRRL B-527 / VKM B-1787 / 2291 / W)).